The following is a 172-amino-acid chain: S-ribosylhomocysteine lyase (172 aa).

Fe cation contacts are provided by His-54, His-58, and Cys-128.

This sequence belongs to the LuxS family. Homodimer. Requires Fe cation as cofactor.

The enzyme catalyses S-(5-deoxy-D-ribos-5-yl)-L-homocysteine = (S)-4,5-dihydroxypentane-2,3-dione + L-homocysteine. Involved in the synthesis of autoinducer 2 (AI-2) which is secreted by bacteria and is used to communicate both the cell density and the metabolic potential of the environment. The regulation of gene expression in response to changes in cell density is called quorum sensing. Catalyzes the transformation of S-ribosylhomocysteine (RHC) to homocysteine (HC) and 4,5-dihydroxy-2,3-pentadione (DPD). The sequence is that of S-ribosylhomocysteine lyase from Photobacterium profundum (strain SS9).